The primary structure comprises 381 residues: MESIGIVAPQTMHFAEPLRLQSGSVIGNYQLVVETYGELNAARSNAVLVCHALNASHHVAGVYADDPRSTGWWDNMVGPGKPLDTNRFFVIGVNNLGSCFGSTGPMSIDPSTGKPYGAKFPVVTVEDWVHAQARVADAFGIERFAAVMGGSLGGMQALAWSLMYPERVAHCIDIASTPKLSAQNIAFNEVARSAILSDPDFHGGDYYAHGVKPKRGLRVARMIGHITYLSDDDMAEKFGRALRRADGALDAYNFSFDVEFEVESYLRYQGDKFADYFDANTYLLITRALDYFDPAKAFDGNLTAALAHTQAKYLIASFSTDWRFAPARSREIVKALLDNKRTVSYAEIDAPHGHDAFLLDDARYHNLIRAYYERIANEVGA.

The 316-residue stretch at 45 to 360 (NAVLVCHALN…PHGHDAFLLD (316 aa)) folds into the AB hydrolase-1 domain. Serine 151 acts as the Nucleophile in catalysis. Arginine 221 provides a ligand contact to substrate. Active-site residues include aspartate 321 and histidine 354. Aspartate 355 lines the substrate pocket.

Belongs to the AB hydrolase superfamily. MetX family. In terms of assembly, homodimer.

The protein localises to the cytoplasm. The catalysed reaction is L-homoserine + succinyl-CoA = O-succinyl-L-homoserine + CoA. Its pathway is amino-acid biosynthesis; L-methionine biosynthesis via de novo pathway; O-succinyl-L-homoserine from L-homoserine: step 1/1. Transfers a succinyl group from succinyl-CoA to L-homoserine, forming succinyl-L-homoserine. This chain is Homoserine O-succinyltransferase, found in Burkholderia cenocepacia (strain ATCC BAA-245 / DSM 16553 / LMG 16656 / NCTC 13227 / J2315 / CF5610) (Burkholderia cepacia (strain J2315)).